The chain runs to 258 residues: UPF0246 protein YaaA (258 aa).

The protein belongs to the UPF0246 family.

This chain is UPF0246 protein YaaA, found in Escherichia coli O7:K1 (strain IAI39 / ExPEC).